The sequence spans 281 residues: NADPH-dependent 7-cyano-7-deazaguanine reductase (281 aa).

87–89 (IES) is a binding site for substrate. 89-90 (SK) contributes to the NADPH binding site. The Thioimide intermediate role is filled by Cys-188. Asp-195 functions as the Proton donor in the catalytic mechanism. Substrate is bound at residue 227–228 (HE). An NADPH-binding site is contributed by 256–257 (RG). Residues 261 to 281 (INPYRSTEQDKPAHNNRMARQ) are disordered.

The protein belongs to the GTP cyclohydrolase I family. QueF type 2 subfamily. Homodimer.

It localises to the cytoplasm. It carries out the reaction 7-aminomethyl-7-carbaguanine + 2 NADP(+) = 7-cyano-7-deazaguanine + 2 NADPH + 3 H(+). The protein operates within tRNA modification; tRNA-queuosine biosynthesis. Functionally, catalyzes the NADPH-dependent reduction of 7-cyano-7-deazaguanine (preQ0) to 7-aminomethyl-7-deazaguanine (preQ1). The sequence is that of NADPH-dependent 7-cyano-7-deazaguanine reductase from Vibrio campbellii (strain ATCC BAA-1116).